The sequence spans 617 residues: Secretogranin-2 (617 aa).

The N-terminal stretch at 1–30 (MAGAKAYRLGAVLLLIHLIFLISGAEAASF) is a signal peptide. Tyrosine 153 bears the Sulfotyrosine mark. Phosphoserine is present on residues serine 176 and serine 270. Basic and acidic residues-rich tracts occupy residues 261–286 (TQTQ…EMKR) and 295–307 (EENR…QLSE). A disordered region spans residues 261–307 (TQTQEEVRDSKENTEKNEQINEEMKRSGQLGLPDEENRRESKDQLSE). Serine 434, serine 532, serine 555, and serine 556 each carry phosphoserine.

The protein belongs to the chromogranin/secretogranin protein family. Interacts with Secretogranin III/SCG3.

The protein localises to the secreted. Neuroendocrine protein of the granin family that regulates the biogenesis of secretory granules. In Mus musculus (Mouse), this protein is Secretogranin-2 (Scg2).